Consider the following 333-residue polypeptide: Anthranilate phosphoribosyltransferase (333 aa).

Residues G80, 83–84, S88, 90–93, 108–116, and S120 each bind 5-phospho-alpha-D-ribose 1-diphosphate; these read GD, NIST, and KHGNRSVSS. Residue G80 coordinates anthranilate. S92 contacts Mg(2+). N111 is a binding site for anthranilate. Residue R166 coordinates anthranilate. Residues D224 and E225 each coordinate Mg(2+).

The protein belongs to the anthranilate phosphoribosyltransferase family. Homodimer. Mg(2+) serves as cofactor.

The enzyme catalyses N-(5-phospho-beta-D-ribosyl)anthranilate + diphosphate = 5-phospho-alpha-D-ribose 1-diphosphate + anthranilate. It participates in amino-acid biosynthesis; L-tryptophan biosynthesis; L-tryptophan from chorismate: step 2/5. Its function is as follows. Catalyzes the transfer of the phosphoribosyl group of 5-phosphorylribose-1-pyrophosphate (PRPP) to anthranilate to yield N-(5'-phosphoribosyl)-anthranilate (PRA). The polypeptide is Anthranilate phosphoribosyltransferase (Yersinia pseudotuberculosis serotype O:1b (strain IP 31758)).